Consider the following 152-residue polypeptide: Transcriptional regulator MraZ (152 aa).

SpoVT-AbrB domains are found at residues 5–52 (ASAI…PIQE) and 81–124 (AHEC…DEAA).

It belongs to the MraZ family. In terms of assembly, forms oligomers.

It is found in the cytoplasm. Its subcellular location is the nucleoid. The protein is Transcriptional regulator MraZ of Shewanella halifaxensis (strain HAW-EB4).